The following is a 248-amino-acid chain: Trypsin II-P29 (248 aa).

An N-terminal signal peptide occupies residues 1–16 (MKFLFLILSCLGAAVA). Residues 17 to 25 (FPGGADDDK) constitute a propeptide, activation peptide. One can recognise a Peptidase S1 domain in the interval 26–246 (IVGGYTCPEH…YVDWIQETIA (221 aa)). 6 disulfides stabilise this stretch: C32–C162, C50–C66, C134–C235, C141–C208, C173–C187, and C198–C222. H65 acts as the Charge relay system in catalysis. Ca(2+) is bound by residues E77, N79, V82, and E87. The Charge relay system role is filled by D109. S202 serves as the catalytic Charge relay system.

This sequence belongs to the peptidase S1 family. It depends on Ca(2+) as a cofactor. As to expression, high levels are seen in the pancreas while lower levels are found in the liver, spleen and thymus.

Its subcellular location is the secreted. The protein resides in the extracellular space. The enzyme catalyses Preferential cleavage: Arg-|-Xaa, Lys-|-Xaa.. This is Trypsin II-P29 from Gallus gallus (Chicken).